We begin with the raw amino-acid sequence, 396 residues long: S-adenosylmethionine synthase (396 aa).

An ATP-binding site is contributed by histidine 16. Aspartate 18 serves as a coordination point for Mg(2+). Residue glutamate 44 coordinates K(+). Residues glutamate 57 and glutamine 100 each coordinate L-methionine. A flexible loop region spans residues 100–110 (QSVDIAQGVDR). Residues 165-167 (DAK), aspartate 240, 246-247 (RK), alanine 263, and lysine 267 contribute to the ATP site. Aspartate 240 is an L-methionine binding site. Lysine 271 lines the L-methionine pocket.

It belongs to the AdoMet synthase family. In terms of assembly, homotetramer; dimer of dimers. It depends on Mg(2+) as a cofactor. The cofactor is K(+).

The protein localises to the cytoplasm. The catalysed reaction is L-methionine + ATP + H2O = S-adenosyl-L-methionine + phosphate + diphosphate. It participates in amino-acid biosynthesis; S-adenosyl-L-methionine biosynthesis; S-adenosyl-L-methionine from L-methionine: step 1/1. Its function is as follows. Catalyzes the formation of S-adenosylmethionine (AdoMet) from methionine and ATP. The overall synthetic reaction is composed of two sequential steps, AdoMet formation and the subsequent tripolyphosphate hydrolysis which occurs prior to release of AdoMet from the enzyme. This chain is S-adenosylmethionine synthase, found in Pseudomonas savastanoi pv. phaseolicola (strain 1448A / Race 6) (Pseudomonas syringae pv. phaseolicola (strain 1448A / Race 6)).